We begin with the raw amino-acid sequence, 1365 residues long: Histone-lysine N-methyltransferase NSD2 (1365 aa).

A phosphothreonine mark is found at Thr-110 and Thr-114. At Ser-121 the chain carries Phosphoserine. The disordered stretch occupies residues 149-170; sequence ADVSQSEENGQKPENKARRNRK. Ser-172 bears the Phosphoserine mark. Residues 222 to 286 form the PWWP 1 domain; sequence VGDLVWSKVS…FEKSLVAFEG (65 aa). Position 376 is a phosphoserine (Ser-376). Disordered regions lie at residues 376 to 455 and 516 to 658; these read SSGV…RKGD and EDSG…SKKS. Thr-422 is modified (phosphothreonine). Residues 453-521 constitute a DNA-binding region (HMG box); the sequence is KGDAASQFLV…VQAEEDSGNV (69 aa). The residue at position 544 (Thr-544) is a Phosphothreonine. The segment covering 552–567 has biased composition (basic and acidic residues); sequence DKHSLRKRDTITDKTA. The segment covering 580-590 has biased composition (polar residues); sequence SLKSQAATKNL. The span at 606-622 shows a compositional bias: low complexity; the sequence is AASSALGFSKSSSPSAS. Phosphoserine is present on Ser-614. A compositionally biased stretch (acidic residues) spans 632–648; it reads PGDEPSESPYESADETQ. PHD-type zinc fingers lie at residues 667–713, 714–770, and 831–875; these read EYVC…CASG, IHSC…CHAS, and VSWC…CRAG. One can recognise a PWWP 2 domain in the interval 880 to 942; sequence FQDIIWVKLG…QARVFPYMEG (63 aa). The region spanning 1011–1061 is the AWS domain; it reads SEIPKCNCKPTDENPCGFDSECLNRMLMFECHPQVCPAGEFCQNQCFTKRQ. Positions 1016, 1018, 1026, 1032, 1041, 1046, and 1052 each coordinate Zn(2+). An SET domain is found at 1063–1180; sequence PETKIIKTDG…AGTELTFNYN (118 aa). S-adenosyl-L-methionine contacts are provided by residues Trp-1075, 1115–1118, and 1141–1142; these read THFY and NH. Residue Cys-1144 coordinates Zn(2+). Asn-1186 is a binding site for S-adenosyl-L-methionine. Positions 1187–1203 constitute a Post-SET domain; that stretch reads EKTVCRCGASNCSGFLG. Cys-1191 is a Zn(2+) binding site. Arg-1192 lines the S-adenosyl-L-methionine pocket. Residues Cys-1193 and Cys-1198 each contribute to the Zn(2+) site. The segment at 1207–1232 is disordered; the sequence is KTSTTLSSEEKGKKTKKKTRRRRAKG. A compositionally biased stretch (basic residues) spans 1219–1230; that stretch reads KKTKKKTRRRRA. Residues 1239-1286 form a PHD-type 4; atypical zinc finger; sequence EDECFRCGDGGQLVLCDRKFCTKAYHLSCLGLGKRPFGKWECPWHHCD. The tract at residues 1333-1365 is disordered; the sequence is VRSTKTEKPPPEPGKPKGKRRRRRGWRRVTEGK. Residues 1348–1359 are compositionally biased toward basic residues; sequence PKGKRRRRRGWR.

This sequence belongs to the class V-like SAM-binding methyltransferase superfamily. Histone-lysine methyltransferase family. SET2 subfamily. Interacts with HDAC1. Interacts (via PHD-type zinc fingers 1, 2 and 3) with SALL1. Interacts (via PHD-type 1, 2 and 3) with SALL4. Interacts with NANOG. Interacts with OGT. Interacts (via HMG box) with NKX2-5. Widely expressed. Predominantly expressed in thymus and testis.

It localises to the nucleus. The protein localises to the chromosome. It is found in the cytoplasm. The protein resides in the nucleolus. It carries out the reaction L-lysyl(36)-[histone H3] + S-adenosyl-L-methionine = N(6)-methyl-L-lysyl(36)-[histone H3] + S-adenosyl-L-homocysteine + H(+). The catalysed reaction is L-lysyl(36)-[histone H3] + 2 S-adenosyl-L-methionine = N(6),N(6)-dimethyl-L-lysyl(36)-[histone H3] + 2 S-adenosyl-L-homocysteine + 2 H(+). Functionally, histone methyltransferase which specifically dimethylates nucleosomal histone H3 at 'Lys-36' (H3K36me2). Also monomethylates nucleosomal histone H3 at 'Lys-36' (H3K36me) in vitro. Does not trimethylate nucleosomal histone H3 at 'Lys-36' (H3K36me3). However, specifically trimethylates histone H3 at 'Lys-36' (H3K36me3) at euchromatic regions in embryonic stem (ES) cells. By methylating histone H3 at 'Lys-36', involved in the regulation of gene transcription during various biological processes. In ES cells, associates with developmental transcription factors such as SALL1 and represses inappropriate gene transcription mediated by histone deacetylation. During heart development, associates with transcription factor NKX2-5 to repress transcription of NKX2-5 target genes. Plays an essential role in adipogenesis, by regulating expression of genes involved in pre-adipocyte differentiation. During T-cell receptor (TCR) and CD28-mediated T-cell activation, promotes the transcription of transcription factor BCL6 which is required for follicular helper T (Tfh) cell differentiation. During B-cell development, required for the generation of the B1 lineage. During B2 cell activation, may contribute to the control of isotype class switch recombination (CRS), splenic germinal center formation, and the humoral immune response. Plays a role in class switch recombination of the immunoglobulin heavy chain (IgH) locus during B-cell activation. By regulating the methylation of histone H3 at 'Lys-36' and histone H4 at 'Lys-20' at the IgH locus, involved in TP53BP1 recruitment to the IgH switch region and promotes the transcription of IgA. In terms of biological role, histone methyltransferase which specifically dimethylates nucleosomal histone H3 at 'Lys-36' (H3K36me2). Its function is as follows. Histone methyltransferase which specifically dimethylates nucleosomal histone H3 at 'Lys-36' (H3K36me2). Methylation of histone H3 at 'Lys-27' is controversial. Mono-, di- or tri-methylates histone H3 at 'Lys-27' (H3K27me, H3K27me2 and H3K27me3). Does not methylate histone H3 at 'Lys-27'. May act as a transcription regulator that binds DNA and suppresses IL5 transcription through HDAC recruitment. The chain is Histone-lysine N-methyltransferase NSD2 from Homo sapiens (Human).